Consider the following 99-residue polypeptide: Plastocyanin (99 aa).

Residues 1-99 (IEILLGGDDG…AGMVGKVTVN (99 aa)) form the Plastocyanin-like domain. Cu cation contacts are provided by histidine 37, cysteine 84, histidine 87, and methionine 92.

Belongs to the plastocyanin family. The cofactor is Cu(2+).

The protein localises to the plastid. It is found in the chloroplast thylakoid membrane. In terms of biological role, participates in electron transfer between P700 and the cytochrome b6-f complex in photosystem I. In Cucumis sativus (Cucumber), this protein is Plastocyanin (PETE).